A 924-amino-acid chain; its full sequence is Intercellular adhesion molecule 5 (924 aa).

A signal peptide spans 1–31 (MPGPSPGLRRALLGLWAALGLGLFGLSAVSQ). The Extracellular segment spans residues 32–835 (EPFWADLQPR…RITVRVAGPW (804 aa)). Ig-like C2-type domains are found at residues 48-130 (GGSL…PLPP), 135-235 (GENF…RLAA), 242-329 (GSER…LLTL), 337-402 (GQMV…SAEL), 408-486 (PRLD…VTLT), 491-568 (PALD…VAVT), 573-662 (PRFE…VVSA), 666-739 (PEMD…RTVT), and 746-830 (PVVA…ITVR). N-linked (GlcNAc...) (high mannose) asparagine glycosylation is present at asparagine 54. 2 cysteine pairs are disulfide-bonded: cysteine 55/cysteine 99 and cysteine 59/cysteine 103. N-linked (GlcNAc...) asparagine glycans are attached at residues asparagine 74 and asparagine 137. A disulfide bridge links cysteine 142 with cysteine 198. Phosphothreonine is present on residues threonine 182 and threonine 184. Asparagine 195 and asparagine 214 each carry an N-linked (GlcNAc...) asparagine glycan. Cysteines 249 and 302 form a disulfide. N-linked (GlcNAc...) asparagine glycosylation is found at asparagine 303, asparagine 316, asparagine 371, and asparagine 397. Cysteine 344 and cysteine 383 form a disulfide bridge. 3 disulfide bridges follow: cysteine 415-cysteine 470, cysteine 498-cysteine 552, and cysteine 580-cysteine 645. N-linked (GlcNAc...) asparagine glycosylation is found at asparagine 583 and asparagine 646. Cysteine 673 and cysteine 725 are joined by a disulfide. Residues asparagine 764, asparagine 795, and asparagine 796 are each glycosylated (N-linked (GlcNAc...) asparagine). The cysteines at positions 769 and 814 are disulfide-linked. The helical transmembrane segment at 836–856 (LWVAVGGAAGGAALLAAGAGL) threads the bilayer. Residues 857 to 924 (AFYVQSTACK…EVFAIQLTSA (68 aa)) lie on the Cytoplasmic side of the membrane. Over residues 891-903 (AGGAAGAEGGPEA) the composition is skewed to gly residues. Residues 891-911 (AGGAAGAEGGPEAAGGAAESP) are disordered.

Belongs to the immunoglobulin superfamily. ICAM family. Glycosylation at Asn-54 is critical for functional folding. Expressed on neurons in the most rostral segment of the mammalian brain, the telencephalon.

The protein localises to the membrane. Its function is as follows. ICAM proteins are ligands for the leukocyte adhesion protein LFA-1 (integrin alpha-L/beta-2). This Homo sapiens (Human) protein is Intercellular adhesion molecule 5 (ICAM5).